A 689-amino-acid polypeptide reads, in one-letter code: DNA-directed RNA polymerase subunit beta' (689 aa).

Residues Cys-69, Cys-71, Cys-87, and Cys-90 each coordinate Zn(2+). The Mg(2+) site is built by Asp-489, Asp-491, and Asp-493.

Belongs to the RNA polymerase beta' chain family. RpoC1 subfamily. In plastids the minimal PEP RNA polymerase catalytic core is composed of four subunits: alpha, beta, beta', and beta''. When a (nuclear-encoded) sigma factor is associated with the core the holoenzyme is formed, which can initiate transcription. The cofactor is Mg(2+). Zn(2+) serves as cofactor.

It is found in the plastid. The protein localises to the chloroplast. The catalysed reaction is RNA(n) + a ribonucleoside 5'-triphosphate = RNA(n+1) + diphosphate. Its function is as follows. DNA-dependent RNA polymerase catalyzes the transcription of DNA into RNA using the four ribonucleoside triphosphates as substrates. In Lactuca sativa (Garden lettuce), this protein is DNA-directed RNA polymerase subunit beta'.